The sequence spans 348 residues: Ethanol acetyltransferase 2 (348 aa).

Residues 1–19 (MIFNSLSIKRLSSTXTSLP) constitute a mitochondrion transit peptide. An AB hydrolase-1 domain is found at 49–305 (IIFLHGIYGY…VMKERPQEYI (257 aa)). Active-site charge relay system residues include Ser121, Asp145, and His294.

The protein belongs to the AB hydrolase superfamily.

It localises to the mitochondrion. The enzyme catalyses ethanol + acetyl-CoA = ethyl acetate + CoA. It catalyses the reaction acetyl-CoA + H2O = acetate + CoA + H(+). It carries out the reaction ethyl acetate + H2O = ethanol + acetate + H(+). Functionally, alcohol acetyltransferase that catalyzes the synthesis of ethyl acetate from ethanol and acetyl-CoA. Can also function as a thioesterase by hydrolyzing acetyl-CoA in the absence of ethanol, as well as esterase hydrolyzing ethyl acetate. This Hanseniaspora uvarum (Yeast) protein is Ethanol acetyltransferase 2 (EAT2).